The sequence spans 217 residues: NAD(P)H-quinone oxidoreductase subunit M, chloroplastic (217 aa).

The transit peptide at 1 to 21 directs the protein to the chloroplast; that stretch reads MVAAFSYTACTKLSLLHPSMV. Positions 48-67 are disordered; that stretch reads ETETLKEEQSTEKMKKQPTP. The segment covering 50–62 has biased composition (basic and acidic residues); it reads ETLKEEQSTEKMK.

It belongs to the NDH complex subunit M family. As to quaternary structure, part of the chloroplast NDH complex, composed of a mixture of chloroplast and nucleus encoded subunits. Component of the NDH subcomplex A, at least composed of ndhH, ndhI, ndhJ, ndhK, ndhL, ndhM, ndhN and ndhO.

Its subcellular location is the plastid. It localises to the chloroplast thylakoid membrane. It carries out the reaction a plastoquinone + NADH + (n+1) H(+)(in) = a plastoquinol + NAD(+) + n H(+)(out). It catalyses the reaction a plastoquinone + NADPH + (n+1) H(+)(in) = a plastoquinol + NADP(+) + n H(+)(out). In terms of biological role, NDH shuttles electrons from NAD(P)H:plastoquinone, via FMN and iron-sulfur (Fe-S) centers, to quinones in the photosynthetic chain and possibly in a chloroplast respiratory chain. The immediate electron acceptor for the enzyme in this species is believed to be plastoquinone. Couples the redox reaction to proton translocation, and thus conserves the redox energy in a proton gradient. In Arabidopsis thaliana (Mouse-ear cress), this protein is NAD(P)H-quinone oxidoreductase subunit M, chloroplastic.